The chain runs to 306 residues: Ornithine carbamoyltransferase (306 aa).

Carbamoyl phosphate-binding positions include 53-56 (STRT), Gln-80, Arg-104, and 131-134 (HPCQ). Residues Asn-162, Asp-219, and 223-224 (SM) contribute to the L-ornithine site. Residues 259–260 (CL) and Arg-287 each bind carbamoyl phosphate.

Belongs to the aspartate/ornithine carbamoyltransferase superfamily. OTCase family.

The protein localises to the cytoplasm. It catalyses the reaction carbamoyl phosphate + L-ornithine = L-citrulline + phosphate + H(+). The protein operates within amino-acid biosynthesis; L-arginine biosynthesis; L-arginine from L-ornithine and carbamoyl phosphate: step 1/3. In terms of biological role, reversibly catalyzes the transfer of the carbamoyl group from carbamoyl phosphate (CP) to the N(epsilon) atom of ornithine (ORN) to produce L-citrulline. The sequence is that of Ornithine carbamoyltransferase from Pseudomonas syringae pv. tomato (strain ATCC BAA-871 / DC3000).